Here is a 575-residue protein sequence, read N- to C-terminus: Dihydroxy-acid dehydratase (575 aa).

The interval 1-25 (MPTTDSARAADIKQPDIKPRSRDVT) is disordered. The segment covering 8 to 25 (RAADIKQPDIKPRSRDVT) has biased composition (basic and acidic residues). A [2Fe-2S] cluster-binding site is contributed by Cys-64. Position 96 (Asp-96) interacts with Mg(2+). Cys-137 contributes to the [2Fe-2S] cluster binding site. Positions 138 and 139 each coordinate Mg(2+). Residue Lys-139 is modified to N6-carboxylysine. Position 214 (Cys-214) interacts with [2Fe-2S] cluster. Residue Glu-465 participates in Mg(2+) binding. Ser-491 (proton acceptor) is an active-site residue.

This sequence belongs to the IlvD/Edd family. As to quaternary structure, homodimer. It depends on [2Fe-2S] cluster as a cofactor. Requires Mg(2+) as cofactor.

It catalyses the reaction (2R)-2,3-dihydroxy-3-methylbutanoate = 3-methyl-2-oxobutanoate + H2O. The enzyme catalyses (2R,3R)-2,3-dihydroxy-3-methylpentanoate = (S)-3-methyl-2-oxopentanoate + H2O. It participates in amino-acid biosynthesis; L-isoleucine biosynthesis; L-isoleucine from 2-oxobutanoate: step 3/4. It functions in the pathway amino-acid biosynthesis; L-valine biosynthesis; L-valine from pyruvate: step 3/4. Functionally, functions in the biosynthesis of branched-chain amino acids. Catalyzes the dehydration of (2R,3R)-2,3-dihydroxy-3-methylpentanoate (2,3-dihydroxy-3-methylvalerate) into 2-oxo-3-methylpentanoate (2-oxo-3-methylvalerate) and of (2R)-2,3-dihydroxy-3-methylbutanoate (2,3-dihydroxyisovalerate) into 2-oxo-3-methylbutanoate (2-oxoisovalerate), the penultimate precursor to L-isoleucine and L-valine, respectively. This Mycolicibacterium paratuberculosis (strain ATCC BAA-968 / K-10) (Mycobacterium paratuberculosis) protein is Dihydroxy-acid dehydratase.